Consider the following 302-residue polypeptide: Zinc import ATP-binding protein ZnuC (302 aa).

The ABC transporter domain maps to 13–228 (VSLANAGVRR…PEYLKLFGRR (216 aa)). 45-52 (GPNGSGKS) lines the ATP pocket.

Belongs to the ABC transporter superfamily. Zinc importer (TC 3.A.1.15.5) family. As to quaternary structure, the complex is composed of two ATP-binding proteins (ZnuC), two transmembrane proteins (ZnuB) and a solute-binding protein (ZnuA).

It is found in the cell inner membrane. It catalyses the reaction Zn(2+)(out) + ATP(in) + H2O(in) = Zn(2+)(in) + ADP(in) + phosphate(in) + H(+)(in). Part of the ABC transporter complex ZnuABC involved in zinc import. Responsible for energy coupling to the transport system. The sequence is that of Zinc import ATP-binding protein ZnuC from Rhizobium meliloti (strain 1021) (Ensifer meliloti).